The primary structure comprises 733 residues: MLDCGKKAVKSQVISGRLEKFVRLDSMDSRYSQTSDTGLNRCTLNLQGPTRGGGAQGNNVSSGSFKKGFRKGSKGLWSIGRSIGLGVSRAVFPEDLKVSEKKIFDPQDKFLLLCNKLFVTSCILAVSVDPLFLYLPFVKDNEKCIGIDRKLAIIATTLRTVIDAFYLFHMALRFRTAFVAPSSRVFGRGELVIDPAQIAKRYLQQYFIIDFLSVLPLPQIVVWRFLYISKGASVLATKRALRSIILVQYIPRFIRLYPLSSELKRTAGVFAETAWAGAAYYLLLYMLASHIVGAIWYLLALERYNGCWTKVCSNSSLDCHRNFLFCGNEKMDGYAAWTTIKDSVLQLNCPVNTTDNPPFDFGIYLRALSSGIVSSKSFVSKYFFCLWWGLQNLSTLGQGLETSTYPGEVIFSIALAIAGLLLFALLIGNMQTYLQSLTIRLEEMRVKRRDSEQWMHHRMLPPELRERVRRYDQYKWLETRGVDEENLVQNLPKDLRRDIKRHLCLALVRRVPLFENMDERLLDAICERLKPCLYTESSYLVREGDPVNEMLFIIRGRLESVTTDGGRSGFFNRSLLKEGDFCGEELLTWALDPKSGSNLPSSTRTAKALTEVEAFALIADELKFVASQFRRLHSRQVQHTFRFYSQQWRTWAAIFIQAAWRRYVKKKKLEQLRKEEEEGEGSVTSIRATFLASKFAANALRKVHKNRIEAKSTIELVKYQKPSEPDFSADDTS.

The Cytoplasmic portion of the chain corresponds to 1–117 (MLDCGKKAVK…DKFLLLCNKL (117 aa)). The chain crosses the membrane as a helical span at residues 118–138 (FVTSCILAVSVDPLFLYLPFV). Residues 139-151 (KDNEKCIGIDRKL) lie on the Extracellular side of the membrane. Residues 152–172 (AIIATTLRTVIDAFYLFHMAL) form a helical membrane-spanning segment. Residues 173-207 (RFRTAFVAPSSRVFGRGELVIDPAQIAKRYLQQYF) lie on the Cytoplasmic side of the membrane. A helical transmembrane segment spans residues 208 to 228 (IIDFLSVLPLPQIVVWRFLYI). Residues 229 to 239 (SKGASVLATKR) are Extracellular-facing. A helical membrane pass occupies residues 240-260 (ALRSIILVQYIPRFIRLYPLS). Residues 261 to 280 (SELKRTAGVFAETAWAGAAY) are Cytoplasmic-facing. Residues 281-301 (YLLLYMLASHIVGAIWYLLAL) traverse the membrane as a helical segment. Topologically, residues 302 to 406 (ERYNGCWTKV…GQGLETSTYP (105 aa)) are extracellular. A helical membrane pass occupies residues 407-427 (GEVIFSIALAIAGLLLFALLI). At 428 to 733 (GNMQTYLQSL…EPDFSADDTS (306 aa)) the chain is on the cytoplasmic side. Residues 513 to 637 (LFEN…SRQV) and Glu-584 contribute to the a nucleoside 3',5'-cyclic phosphate site. The segment at 629 to 644 (FRRLHSRQVQHTFRFY) is calmodulin-binding. The region spanning 649 to 678 (RTWAAIFIQAAWRRYVKKKKLEQLRKEEEE) is the IQ domain.

This sequence belongs to the cyclic nucleotide-gated cation channel (TC 1.A.1.5) family. As to quaternary structure, homotetramer or heterotetramer.

It is found in the cell membrane. Functionally, putative cyclic nucleotide-gated ion channel. This Arabidopsis thaliana (Mouse-ear cress) protein is Putative cyclic nucleotide-gated ion channel 9 (CNGC9).